The primary structure comprises 501 residues: Ribulose bisphosphate carboxylase large chain (501 aa).

Substrate is bound by residues asparagine 141 and threonine 191. Lysine 193 serves as the catalytic Proton acceptor. Lysine 195 is a binding site for substrate. Residues lysine 219, aspartate 221, and glutamate 222 each contribute to the Mg(2+) site. Lysine 219 bears the N6-carboxylysine mark. Histidine 311 functions as the Proton acceptor in the catalytic mechanism. Substrate-binding residues include arginine 312, histidine 344, and serine 396.

Belongs to the RuBisCO large chain family. Type I subfamily. As to quaternary structure, heterohexadecamer of 8 large chains and 8 small chains. The cofactor is Mg(2+).

It carries out the reaction 2 (2R)-3-phosphoglycerate + 2 H(+) = D-ribulose 1,5-bisphosphate + CO2 + H2O. The catalysed reaction is D-ribulose 1,5-bisphosphate + O2 = 2-phosphoglycolate + (2R)-3-phosphoglycerate + 2 H(+). Its function is as follows. RuBisCO catalyzes two reactions: the carboxylation of D-ribulose 1,5-bisphosphate, the primary event in carbon dioxide fixation, as well as the oxidative fragmentation of the pentose substrate. Both reactions occur simultaneously and in competition at the same active site. The protein is Ribulose bisphosphate carboxylase large chain of Paraburkholderia phymatum (strain DSM 17167 / CIP 108236 / LMG 21445 / STM815) (Burkholderia phymatum).